Here is a 358-residue protein sequence, read N- to C-terminus: tRNA-specific 2-thiouridylase MnmA (358 aa).

ATP is bound by residues 6–13 and leucine 32; that span reads AMSGGVDS. Residue cysteine 101 is the Nucleophile of the active site. Cysteine 101 and cysteine 193 form a disulfide bridge. Glycine 125 is a binding site for ATP. Positions 143–145 are interaction with tRNA; sequence KDQ. The active-site Cysteine persulfide intermediate is cysteine 193.

This sequence belongs to the MnmA/TRMU family.

It localises to the cytoplasm. It catalyses the reaction S-sulfanyl-L-cysteinyl-[protein] + uridine(34) in tRNA + AH2 + ATP = 2-thiouridine(34) in tRNA + L-cysteinyl-[protein] + A + AMP + diphosphate + H(+). Functionally, catalyzes the 2-thiolation of uridine at the wobble position (U34) of tRNA, leading to the formation of s(2)U34. This chain is tRNA-specific 2-thiouridylase MnmA, found in Mycobacterium avium (strain 104).